Reading from the N-terminus, the 374-residue chain is Phenoloxidase-activating enzyme 1 (374 aa).

An N-terminal signal peptide occupies residues 1-19; that stretch reads MWKSLVFFVSALIWSFGSS. Residues 20 to 120 constitute a propeptide, activation peptide; the sequence is QDCTTPTGSR…QCGIDTTGDR (101 aa). The region spanning 21–74 is the Clip domain; it reads DCTTPTGSRSNCVSLYQCQPLYNAFEQRPLPTHVVSYLGRSQCGFEGYVPRVCC. 3 cysteine pairs are disulfide-bonded: Cys-22-Cys-73, Cys-32-Cys-63, and Cys-38-Cys-74. Residues 83–97 show a composition bias toward polar residues; that stretch reads ATSARPTQAPTQGSS. A disordered region spans residues 83-114; it reads ATSARPTQAPTQGSSDVFPEDSSPAPRNQCGI. The Peptidase S1 domain maps to 121-370; it reads VYGGTITDLD…YIDWIQNTIA (250 aa). Cysteines 151 and 167 form a disulfide. His-166 functions as the Charge relay system in the catalytic mechanism. Residues Glu-186 and Asp-194 each contribute to the Ca(2+) site. Residue Asp-228 is the Charge relay system of the active site. Intrachain disulfides connect Cys-292–Cys-307 and Cys-317–Cys-346. The active-site Charge relay system is Ser-321.

Belongs to the peptidase S1 family. CLIP subfamily. Activated by the removal of the N-terminal inhibitory propeptide. As to expression, expressed in hemocytes.

The protein localises to the secreted. With respect to regulation, inhibited by aprotenin. Not inhibited by EDTA, PMSF or leupeptin. Functionally, serine protease which, by cleaving and activating prophenoloxidase (PPO1) after immune challenge, plays an essential role in the melanization immune response to wounding. The polypeptide is Phenoloxidase-activating enzyme 1 (Spodoptera litura (Asian cotton leafworm)).